The chain runs to 126 residues: Anti-adapter protein IraD (126 aa).

Belongs to the GpW/Gp25 family. IraD subfamily. Interacts with RssB.

It localises to the cytoplasm. Inhibits RpoS proteolysis by regulating RssB activity, thereby increasing the stability of the sigma stress factor RpoS during oxidative stress. Its effect on RpoS stability is due to its interaction with RssB, which probably blocks the interaction of RssB with RpoS, and the consequent delivery of the RssB-RpoS complex to the ClpXP protein degradation pathway. The polypeptide is Anti-adapter protein IraD (Salmonella paratyphi A (strain ATCC 9150 / SARB42)).